A 130-amino-acid polypeptide reads, in one-letter code: Flagellar assembly factor FliW (130 aa).

Belongs to the FliW family. Interacts with translational regulator CsrA and flagellin(s).

It localises to the cytoplasm. Acts as an anti-CsrA protein, binds CsrA and prevents it from repressing translation of its target genes, one of which is flagellin. Binds to flagellin and participates in the assembly of the flagellum. This chain is Flagellar assembly factor FliW, found in Borrelia duttonii (strain Ly).